We begin with the raw amino-acid sequence, 1046 residues long: UDP-N-acetylglucosamine--peptide N-acetylglucosaminyltransferase 110 kDa subunit (1046 aa).

Alanine 2 bears the N-acetylalanine mark. Phosphoserine; by GSK3-beta; alternate is present on residues serine 3 and serine 4. Residues serine 3 and serine 4 are each glycosylated (O-linked (GlcNAc) serine; alternate). Serine 20 carries the post-translational modification Phosphoserine. 12 TPR repeats span residues phenylalanine 21 to asparagine 54, alanine 89 to phenylalanine 122, isoleucine 123 to leucine 156, tyrosine 157 to phenylalanine 190, alanine 191 to phenylalanine 224, leucine 225 to histidine 258, alanine 259 to phenylalanine 292, proline 293 to histidine 326, alanine 327 to phenylalanine 360, alanine 361 to phenylalanine 394, alanine 395 to phenylalanine 428, and alanine 429 to phenylalanine 462. Serine 399 is a glycosylation site (O-linked (GlcNAc) serine; by autocatalysis). At threonine 454 the chain carries Phosphothreonine. The TPR 13; truncated repeat unit spans residues proline 463 to leucine 473. The short motif at aspartate 464–tyrosine 466 is the DFP motif element. A Nuclear localization signal motif is present at residues lysine 487–proline 503. Histidine 508 functions as the Proton acceptor in the catalytic mechanism. UDP contacts are provided by residues glutamine 849, lysine 852, alanine 906–lysine 908, histidine 911–arginine 914, histidine 930–threonine 932, and aspartate 935. Position 989 is a phosphotyrosine (tyrosine 989). Residues lysine 991 to lysine 1010 are required for phosphatidylinositol 3,4,5-triphosphate binding.

This sequence belongs to the glycosyltransferase 41 family. O-GlcNAc transferase subfamily. In terms of assembly, monomer; may exist in different oligomerization states in cells. Homotrimer, oligomerizes via TPR repeats 6 and 7. Trimerization is not necessary for activity in vitro, however it increases affinity for UDP-GlcNAc. Component of a THAP1/THAP3-HCFC1-OGT complex. Component of the NSL complex at least composed of MOF/KAT8, KANSL1, KANSL2, KANSL3, MCRS1, PHF20, OGT1/OGT, WDR5 and HCFC1. Found in a complex with KIF5B, RHOT1, RHOT2 and TRAK1. Found in a complex composed of at least SINHCAF, SIN3A, HDAC1, SAP30, RBBP4, OGT and TET1. Component of a complex composed of KMT2E/MLL5, OGT and USP7; the complex stabilizes KMT2E/MLL5, preventing KMT2E/MLL5 ubiquitination and proteasomal-mediated degradation. Interacts (via TPRs 1-6) with SIN3A; the interaction mediates transcriptional repression in parallel with histone deacetylase. Interacts (via TPR 5-6) with TET1, TET2 and TET3. Interacts (via TPR repeats 6 and 7) with ATXN10. Interacts with NSD2. Interacts with PROSER1; this interaction mediates TET2 O-GlcNAcylation and stability by promoting the interaction between OGT and TET2. Post-translationally, ubiquitinated by the SCF(FBXO31) complex, leading to its proteasomal degradation. In terms of processing, phosphorylation on Ser-3 or Ser-4 by GSK3-beta positively regulates its activity. Phosphorylation at Thr-454 by AMPK promotes nuclear localization. Glycosylated via autocatalysis; O-GlcNAcylation at Ser-399 promotes nuclear localization.

The protein resides in the nucleus. It is found in the cytoplasm. The enzyme catalyses L-seryl-[protein] + UDP-N-acetyl-alpha-D-glucosamine = 3-O-(N-acetyl-beta-D-glucosaminyl)-L-seryl-[protein] + UDP + H(+). It catalyses the reaction L-threonyl-[protein] + UDP-N-acetyl-alpha-D-glucosamine = 3-O-(N-acetyl-beta-D-glucosaminyl)-L-threonyl-[protein] + UDP + H(+). The protein operates within protein modification; protein glycosylation. Its activity is regulated as follows. Subject to product inhibition by UDP. Functionally, catalyzes the transfer of a single N-acetylglucosamine from UDP-GlcNAc to a serine or threonine residue in cytoplasmic and nuclear proteins resulting in their modification with a beta-linked N-acetylglucosamine (O-GlcNAc). Glycosylates a large and diverse number of proteins including histone H2B, AKT1, AMPK, ATG4B, CAPRIN1, EZH2, FNIP1, GSDMD, KRT7, LMNA, LMNB1, LMNB2, RPTOR, HOXA1, PFKL, KMT2E/MLL5, MAPT/TAU, TET2, RBL2, RET, NOD2 and HCFC1. Can regulate their cellular processes via cross-talk between glycosylation and phosphorylation or by affecting proteolytic processing. Involved in insulin resistance in muscle and adipocyte cells via glycosylating insulin signaling components and inhibiting the 'Thr-308' phosphorylation of AKT1, enhancing IRS1 phosphorylation and attenuating insulin signaling. Involved in glycolysis regulation by mediating glycosylation of 6-phosphofructokinase PFKL, inhibiting its activity. Plays a key role in chromatin structure by mediating O-GlcNAcylation of 'Ser-112' of histone H2B: recruited to CpG-rich transcription start sites of active genes via its interaction with TET proteins (TET1, TET2 or TET3). As part of the NSL complex indirectly involved in acetylation of nucleosomal histone H4 on several lysine residues. O-GlcNAcylation of 'Ser-75' of EZH2 increases its stability, and facilitating the formation of H3K27me3 by the PRC2/EED-EZH2 complex. Stabilizes KMT2E/MLL5 by mediating its glycosylation, thereby preventing KMT2E/MLL5 ubiquitination. Regulates circadian oscillation of the clock genes and glucose homeostasis in the liver. Stabilizes clock proteins BMAL1 and CLOCK through O-glycosylation, which prevents their ubiquitination and subsequent degradation. Promotes the CLOCK-BMAL1-mediated transcription of genes in the negative loop of the circadian clock such as PER1/2 and CRY1/2. O-glycosylates HCFC1 and regulates its proteolytic processing and transcriptional activity. Component of a THAP1/THAP3-HCFC1-OGT complex that is required for the regulation of the transcriptional activity of RRM1. Regulates mitochondrial motility in neurons by mediating glycosylation of TRAK1. Promotes autophagy by mediating O-glycosylation of ATG4B. Acts as a regulator of mTORC1 signaling by mediating O-glycosylation of RPTOR and FNIP1: O-GlcNAcylation of RPTOR in response to glucose sufficiency promotes activation of the mTORC1 complex. This chain is UDP-N-acetylglucosamine--peptide N-acetylglucosaminyltransferase 110 kDa subunit (OGT), found in Sus scrofa (Pig).